The primary structure comprises 818 residues: Serine/threonine-protein kinase PTK2/STK2 (818 aa).

Residues 28–39 (NSSSHTDNSSLL) show a composition bias toward polar residues. 2 disordered regions span residues 28 to 100 (NSSS…GSVS) and 117 to 177 (NPYL…SHHF). Residue Thr56 is modified to Phosphothreonine. Residues 57-81 (SPSISGSGSGGNSPSSSAGARQRSA) show a composition bias toward low complexity. Phosphoserine is present on residues Ser59 and Ser80. A compositionally biased stretch (basic and acidic residues) spans 136–160 (TRDRDRAVLDREKEKERARNKERNT). Residues 255–562 (DTDNKPIGSG…MDDLFNDPFF (308 aa)) enclose the Protein kinase domain. ATP-binding positions include 261-269 (IGSGGSSEV) and Lys285. Asp388 functions as the Proton acceptor in the catalytic mechanism. Over residues 585–595 (STSTNDFSENS) the composition is skewed to polar residues. The disordered stretch occupies residues 585–795 (STSTNDFSEN…SVSSSKKKKV (211 aa)). A phosphoserine mark is found at Ser623 and Ser632. Composition is skewed to basic and acidic residues over residues 638–651 (KVKDSAKTKTHDVG) and 659–685 (TKPKQQDKKENLKKDEVKNGDKDKVIE). Ser694 is modified (phosphoserine). Thr700 carries the phosphothreonine modification. Ser711 bears the Phosphoserine mark. Residues 727–736 (TPTTPTHNGP) show a composition bias toward low complexity. Thr737 is modified (phosphothreonine). 4 positions are modified to phosphoserine: Ser752, Ser755, Ser778, and Ser781. Over residues 755 to 767 (SLKSETPASTKNF) the composition is skewed to polar residues. Low complexity predominate over residues 768–789 (SAPNVSSSSNSLRSLGSPSVSS).

It belongs to the protein kinase superfamily. Ser/Thr protein kinase family.

The protein resides in the nucleus. The protein localises to the cytoplasm. It catalyses the reaction L-seryl-[protein] + ATP = O-phospho-L-seryl-[protein] + ADP + H(+). The catalysed reaction is L-threonyl-[protein] + ATP = O-phospho-L-threonyl-[protein] + ADP + H(+). Its function is as follows. Essential determinant for high-affinity spermidine transport. Required for the activation of the plasma membrane proton pump PMA1 via phosphorylation of 'Ser-899'. This is Serine/threonine-protein kinase PTK2/STK2 (PTK2) from Saccharomyces cerevisiae (strain ATCC 204508 / S288c) (Baker's yeast).